The sequence spans 77 residues: Small ribosomal subunit protein bS21 (77 aa).

The protein belongs to the bacterial ribosomal protein bS21 family.

This is Small ribosomal subunit protein bS21 from Methylococcus capsulatus (strain ATCC 33009 / NCIMB 11132 / Bath).